The chain runs to 51 residues: uncharacterized protein (51 aa).

This is an uncharacterized protein from Bacillus subtilis (strain 168).